Here is a 170-residue protein sequence, read N- to C-terminus: uncharacterized protein (170 aa).

The helical transmembrane segment at 7–27 threads the bilayer; that stretch reads LVELLIGLAIISIALNFAVPL.

Its subcellular location is the membrane. This is an uncharacterized protein from Haemophilus influenzae (strain ATCC 51907 / DSM 11121 / KW20 / Rd).